A 285-amino-acid polypeptide reads, in one-letter code: Putative sugar uptake protein lmo0424 (285 aa).

Transmembrane regions (helical) follow at residues 2–21, 31–50, 55–77, 111–133, 146–168, 172–194, 207–229, 233–255, and 262–284; these read SIYL…PIIA, QLLG…FWIL, TVLS…LLQF, WQTV…GVVM, SVSF…YVVT, FDVT…AIGI, VTFN…LATA, VATS…ILIF, and LEWT…LSLL.

The protein belongs to the GRP transporter (TC 2.A.7.5) family.

The protein resides in the cell membrane. This Listeria monocytogenes serovar 1/2a (strain ATCC BAA-679 / EGD-e) protein is Putative sugar uptake protein lmo0424.